The sequence spans 392 residues: Formate-dependent phosphoribosylglycinamide formyltransferase (392 aa).

Residues 22–23 and E82 contribute to the N(1)-(5-phospho-beta-D-ribosyl)glycinamide site; that span reads EL. ATP-binding positions include R114, K155, 160–165, 195–198, and E203; these read SSGKGQ and EGVV. The ATP-grasp domain maps to 119–308; it reads RLAAEELWVP…EFALHVRAFL (190 aa). Residues E267 and E279 each contribute to the Mg(2+) site. N(1)-(5-phospho-beta-D-ribosyl)glycinamide contacts are provided by residues D286, K355, and 362 to 363; that span reads RR.

Belongs to the PurK/PurT family. As to quaternary structure, homodimer.

The enzyme catalyses N(1)-(5-phospho-beta-D-ribosyl)glycinamide + formate + ATP = N(2)-formyl-N(1)-(5-phospho-beta-D-ribosyl)glycinamide + ADP + phosphate + H(+). Its pathway is purine metabolism; IMP biosynthesis via de novo pathway; N(2)-formyl-N(1)-(5-phospho-D-ribosyl)glycinamide from N(1)-(5-phospho-D-ribosyl)glycinamide (formate route): step 1/1. Its function is as follows. Involved in the de novo purine biosynthesis. Catalyzes the transfer of formate to 5-phospho-ribosyl-glycinamide (GAR), producing 5-phospho-ribosyl-N-formylglycinamide (FGAR). Formate is provided by PurU via hydrolysis of 10-formyl-tetrahydrofolate. The chain is Formate-dependent phosphoribosylglycinamide formyltransferase from Erwinia tasmaniensis (strain DSM 17950 / CFBP 7177 / CIP 109463 / NCPPB 4357 / Et1/99).